Consider the following 351-residue polypeptide: CREB homolog crh-2 (351 aa).

Disordered regions lie at residues 46–104 (EPCT…EPLG) and 119–149 (SPSA…HQQQ). Low complexity predominate over residues 82–95 (GSSSGSPSSSLSSP). The bZIP domain maps to 282–345 (SLKIVRRKIK…RDLQQKLHQY (64 aa)). The interval 284–304 (KIVRRKIKNKLSAQESRRKRK) is basic motif. Positions 307–314 (IDALEGRL) are leucine-zipper.

This sequence belongs to the bZIP family.

It is found in the nucleus. Its function is as follows. Transcription factor. Plays a role in regulating the developmentally arrested larval state known as dauer, when induced by long-term exposure to the Gram-negative bacterium P.aeruginosa PAO1, but dispensable for dauer formation induced by starvation. Involved in regulating expression of microRNA mir-243, during long-term exposure to P.aeruginosa PAO1. The protein is CREB homolog crh-2 of Caenorhabditis elegans.